The sequence spans 197 residues: Na(+)-translocating NADH-quinone reductase subunit E (197 aa).

Helical transmembrane passes span 11 to 31 (SVFI…FLAV), 35 to 55 (VSTA…SVPA), 76 to 96 (FLKF…LEMF), 108 to 128 (LGIY…VSFM), 139 to 159 (VVYG…LAGI), and 175 to 195 (LGIT…FSGI).

It belongs to the NqrDE/RnfAE family. Composed of six subunits; NqrA, NqrB, NqrC, NqrD, NqrE and NqrF.

It localises to the cell inner membrane. The enzyme catalyses a ubiquinone + n Na(+)(in) + NADH + H(+) = a ubiquinol + n Na(+)(out) + NAD(+). Functionally, NQR complex catalyzes the reduction of ubiquinone-1 to ubiquinol by two successive reactions, coupled with the transport of Na(+) ions from the cytoplasm to the periplasm. NqrA to NqrE are probably involved in the second step, the conversion of ubisemiquinone to ubiquinol. In Neisseria meningitidis serogroup A / serotype 4A (strain DSM 15465 / Z2491), this protein is Na(+)-translocating NADH-quinone reductase subunit E.